Reading from the N-terminus, the 547-residue chain is Chaperonin GroEL (547 aa).

ATP is bound by residues 30 to 33, lysine 51, 87 to 91, glycine 415, and aspartate 496; these read TLGP and DGTTT. The interval 527–547 is disordered; it reads SDKAEPMPMRGGMGGMGGMDF. Over residues 537-547 the composition is skewed to gly residues; it reads GGMGGMGGMDF.

Belongs to the chaperonin (HSP60) family. In terms of assembly, forms a cylinder of 14 subunits composed of two heptameric rings stacked back-to-back. Interacts with the co-chaperonin GroES.

It is found in the cytoplasm. The enzyme catalyses ATP + H2O + a folded polypeptide = ADP + phosphate + an unfolded polypeptide.. Its function is as follows. Together with its co-chaperonin GroES, plays an essential role in assisting protein folding. The GroEL-GroES system forms a nano-cage that allows encapsulation of the non-native substrate proteins and provides a physical environment optimized to promote and accelerate protein folding. In Rickettsia africae (strain ESF-5), this protein is Chaperonin GroEL.